A 399-amino-acid polypeptide reads, in one-letter code: Acetate kinase (399 aa).

Residue asparagine 7 coordinates Mg(2+). Lysine 14 contributes to the ATP binding site. Position 91 (arginine 91) interacts with substrate. Catalysis depends on aspartate 148, which acts as the Proton donor/acceptor. ATP-binding positions include 208–212 (HLGNG), 283–285 (DFR), and 331–335 (GIGEN). Position 384 (glutamate 384) interacts with Mg(2+).

It belongs to the acetokinase family. Homodimer. Requires Mg(2+) as cofactor. Mn(2+) is required as a cofactor.

It is found in the cytoplasm. It carries out the reaction acetate + ATP = acetyl phosphate + ADP. Its pathway is metabolic intermediate biosynthesis; acetyl-CoA biosynthesis; acetyl-CoA from acetate: step 1/2. Catalyzes the formation of acetyl phosphate from acetate and ATP. Can also catalyze the reverse reaction. The chain is Acetate kinase from Acetivibrio thermocellus (strain ATCC 27405 / DSM 1237 / JCM 9322 / NBRC 103400 / NCIMB 10682 / NRRL B-4536 / VPI 7372) (Clostridium thermocellum).